The chain runs to 202 residues: Small ribosomal subunit protein uS4c (202 aa).

One can recognise an S4 RNA-binding domain in the interval 90–154; the sequence is MRLDNIIFRL…SQSIITKNLN (65 aa).

This sequence belongs to the universal ribosomal protein uS4 family. As to quaternary structure, part of the 30S ribosomal subunit. Contacts protein S5. The interaction surface between S4 and S5 is involved in control of translational fidelity.

The protein localises to the plastid. It is found in the chloroplast. Its function is as follows. One of the primary rRNA binding proteins, it binds directly to 16S rRNA where it nucleates assembly of the body of the 30S subunit. With S5 and S12 plays an important role in translational accuracy. This Ricciocarpos natans (Liverwort) protein is Small ribosomal subunit protein uS4c (rps4).